The following is a 225-amino-acid chain: MDYRKLHGWDLSPEEAIKVQNELRKKIKLVPYEGEPEYVAGVDLSFPGKKEGLAVIVVLEYPSFRIVEIVSERGEITFPYIPGLLAFREGPLFLKAWEKLRTKPDVVVFDGQGLAHPRKLGIASHMGLFIEIPTIGVAKSRLYGTFKMPEDKRCSWSYLYDGEEIIGCVVRTKEGSAPVFVSPGHLMDVESSKRLVKAFTLPGRRIPEPTRLAHIYTQRLKKGLF.

Mg(2+) contacts are provided by Asp-43 and Asp-110.

This sequence belongs to the endonuclease V family. Requires Mg(2+) as cofactor.

Its subcellular location is the cytoplasm. It carries out the reaction Endonucleolytic cleavage at apurinic or apyrimidinic sites to products with a 5'-phosphate.. Functionally, DNA repair enzyme involved in the repair of deaminated bases. Selectively cleaves double-stranded DNA at the second phosphodiester bond 3' to a deoxyinosine leaving behind the intact lesion on the nicked DNA. This Thermotoga sp. (strain RQ2) protein is Endonuclease V.